The following is a 547-amino-acid chain: Undecaprenyl phosphate-alpha-4-amino-4-deoxy-L-arabinose arabinosyl transferase (547 aa).

10 helical membrane passes run 83–103, 111–131, 174–194, 205–225, 253–273, 286–306, 311–331, 346–366, 378–398, and 408–428; these read FASA…ALQL, FLAS…TYSV, FLTK…PYVI, FGPL…IAVH, APFW…LGLL, ISPE…FFSI, LLTY…ANAV, AWLN…LAFS, GALA…FIQL, and SALC…QSLI.

This sequence belongs to the glycosyltransferase 83 family.

The protein resides in the cell inner membrane. The enzyme catalyses 4-amino-4-deoxy-alpha-L-arabinopyranosyl di-trans,octa-cis-undecaprenyl phosphate + lipid IVA = lipid IIA + di-trans,octa-cis-undecaprenyl phosphate.. Its pathway is lipopolysaccharide metabolism; 4-amino-4-deoxy-beta-L-arabinose-lipid A biosynthesis. Catalyzes the transfer of the L-Ara4N moiety of the glycolipid undecaprenyl phosphate-alpha-L-Ara4N to lipid A. The modified arabinose is attached to lipid A and is required for resistance to polymyxin and cationic antimicrobial peptides. The chain is Undecaprenyl phosphate-alpha-4-amino-4-deoxy-L-arabinose arabinosyl transferase from Aeromonas hydrophila subsp. hydrophila (strain ATCC 7966 / DSM 30187 / BCRC 13018 / CCUG 14551 / JCM 1027 / KCTC 2358 / NCIMB 9240 / NCTC 8049).